Reading from the N-terminus, the 249-residue chain is MLIEEIEFYNVNGKKTTTVVPENTKIKKRVLNDRRTLYVGNLPKNCRKQDLRDLFEPNYGKITINMLKKKPLKKPLKRFAFIEFQEGVNLKKVKEKMNGKIFMNEKIVIENILTKEEKSFEKNQKSNKKTAPDLKPLSTNTLYVKNIPMKSTNEDLAKIFGVDPKNINFVRRELVDLRTNKVFFSDEFHTGEAFIKFDNLGTGDSIQKKCREFKGRKASNGRVLLVKIASAKKNEQKQEGGDNTKIKQN.

RRM domains are found at residues 35 to 114 (RTLY…NILT) and 140 to 231 (NTLY…IASA).

The protein is Ribonucleoprotein 1 (RNP1) of Saccharomyces cerevisiae (strain ATCC 204508 / S288c) (Baker's yeast).